The primary structure comprises 290 residues: Acetyl-coenzyme A carboxylase carboxyl transferase subunit beta (290 aa).

The region spanning 27-290 (LWHKCPSCEA…FTHSPSPVSA (264 aa)) is the CoA carboxyltransferase N-terminal domain. The Zn(2+) site is built by Cys31, Cys34, Cys50, and Cys53. The segment at 31-53 (CPSCEAVLYRPELEKTLDVCPKC) adopts a C4-type zinc-finger fold.

The protein belongs to the AccD/PCCB family. In terms of assembly, acetyl-CoA carboxylase is a heterohexamer composed of biotin carboxyl carrier protein (AccB), biotin carboxylase (AccC) and two subunits each of ACCase subunit alpha (AccA) and ACCase subunit beta (AccD). It depends on Zn(2+) as a cofactor.

It localises to the cytoplasm. The enzyme catalyses N(6)-carboxybiotinyl-L-lysyl-[protein] + acetyl-CoA = N(6)-biotinyl-L-lysyl-[protein] + malonyl-CoA. Its pathway is lipid metabolism; malonyl-CoA biosynthesis; malonyl-CoA from acetyl-CoA: step 1/1. Component of the acetyl coenzyme A carboxylase (ACC) complex. Biotin carboxylase (BC) catalyzes the carboxylation of biotin on its carrier protein (BCCP) and then the CO(2) group is transferred by the transcarboxylase to acetyl-CoA to form malonyl-CoA. The polypeptide is Acetyl-coenzyme A carboxylase carboxyl transferase subunit beta (Pseudomonas paraeruginosa (strain DSM 24068 / PA7) (Pseudomonas aeruginosa (strain PA7))).